Reading from the N-terminus, the 356-residue chain is Ferrochelatase (356 aa).

Fe cation-binding residues include His214 and Glu295.

This sequence belongs to the ferrochelatase family.

The protein localises to the cytoplasm. The catalysed reaction is heme b + 2 H(+) = protoporphyrin IX + Fe(2+). The protein operates within porphyrin-containing compound metabolism; protoheme biosynthesis; protoheme from protoporphyrin-IX: step 1/1. Functionally, catalyzes the ferrous insertion into protoporphyrin IX. In Paraburkholderia phymatum (strain DSM 17167 / CIP 108236 / LMG 21445 / STM815) (Burkholderia phymatum), this protein is Ferrochelatase.